Reading from the N-terminus, the 448-residue chain is Bifunctional protein GlmU (448 aa).

Residues 1 to 232 (MSERSLLVVV…VDEVAGVNSR (232 aa)) form a pyrophosphorylase region. UDP-N-acetyl-alpha-D-glucosamine-binding positions include 11–14 (LAAG), lysine 25, glutamine 78, and 83–84 (GT). Mg(2+) is bound at residue aspartate 108. Positions 144, 158, 173, and 230 each coordinate UDP-N-acetyl-alpha-D-glucosamine. Asparagine 230 contributes to the Mg(2+) binding site. Residues 233 to 253 (LQLAEAEAILQGRLRRAAMAG) are linker. Positions 254-448 (GATLVAPETV…LRAARGKPKV (195 aa)) are N-acetyltransferase. 2 residues coordinate UDP-N-acetyl-alpha-D-glucosamine: arginine 319 and lysine 337. The Proton acceptor role is filled by histidine 349. UDP-N-acetyl-alpha-D-glucosamine contacts are provided by tyrosine 352 and asparagine 363. Acetyl-CoA contacts are provided by residues alanine 366, 372–373 (NY), serine 409, and arginine 426.

The protein in the N-terminal section; belongs to the N-acetylglucosamine-1-phosphate uridyltransferase family. It in the C-terminal section; belongs to the transferase hexapeptide repeat family. Homotrimer. Mg(2+) serves as cofactor.

The protein localises to the cytoplasm. The catalysed reaction is alpha-D-glucosamine 1-phosphate + acetyl-CoA = N-acetyl-alpha-D-glucosamine 1-phosphate + CoA + H(+). The enzyme catalyses N-acetyl-alpha-D-glucosamine 1-phosphate + UTP + H(+) = UDP-N-acetyl-alpha-D-glucosamine + diphosphate. It functions in the pathway nucleotide-sugar biosynthesis; UDP-N-acetyl-alpha-D-glucosamine biosynthesis; N-acetyl-alpha-D-glucosamine 1-phosphate from alpha-D-glucosamine 6-phosphate (route II): step 2/2. Its pathway is nucleotide-sugar biosynthesis; UDP-N-acetyl-alpha-D-glucosamine biosynthesis; UDP-N-acetyl-alpha-D-glucosamine from N-acetyl-alpha-D-glucosamine 1-phosphate: step 1/1. The protein operates within bacterial outer membrane biogenesis; LPS lipid A biosynthesis. In terms of biological role, catalyzes the last two sequential reactions in the de novo biosynthetic pathway for UDP-N-acetylglucosamine (UDP-GlcNAc). The C-terminal domain catalyzes the transfer of acetyl group from acetyl coenzyme A to glucosamine-1-phosphate (GlcN-1-P) to produce N-acetylglucosamine-1-phosphate (GlcNAc-1-P), which is converted into UDP-GlcNAc by the transfer of uridine 5-monophosphate (from uridine 5-triphosphate), a reaction catalyzed by the N-terminal domain. This is Bifunctional protein GlmU from Azorhizobium caulinodans (strain ATCC 43989 / DSM 5975 / JCM 20966 / LMG 6465 / NBRC 14845 / NCIMB 13405 / ORS 571).